We begin with the raw amino-acid sequence, 138 residues long: Acidic phospholipase A2 MVL-PLA2 (138 aa).

The first 16 residues, 1-16 (MRTLWIVAVCLMGVEG), serve as a signal peptide directing secretion. 7 disulfide bridges follow: Cys42-Cys131, Cys44-Cys60, Cys59-Cys111, Cys65-Cys138, Cys66-Cys104, Cys73-Cys97, and Cys91-Cys102. Residues Tyr43, Gly45, and Gly47 each coordinate Ca(2+). The active site involves His63. Ca(2+) is bound at residue Asp64. Positions 86 to 88 (NGD) match the May inhibit integrin function (Atypical cell attachment site) motif. Residue Asp105 is part of the active site.

This sequence belongs to the phospholipase A2 family. Group II subfamily. D49 sub-subfamily. The cofactor is Ca(2+). Expressed by the venom gland.

It localises to the secreted. The enzyme catalyses a 1,2-diacyl-sn-glycero-3-phosphocholine + H2O = a 1-acyl-sn-glycero-3-phosphocholine + a fatty acid + H(+). Functionally, snake venom phospholipase A2 (PLA2) that displays an inhibitory effect, independent from its catalytic activity, on tumor cell adhesion and migration. This effect is mediated via specific inhibition of integrins alpha-5/beta-1 (ITGA5/ITGB1), alpha-v/beta-3 (ITGAV/ITGB3) and alpha-v/beta-6 (ITGAV/ITGB6). PLA2 catalyzes the calcium-dependent hydrolysis of the 2-acyl groups in 3-sn-phosphoglycerides. The polypeptide is Acidic phospholipase A2 MVL-PLA2 (Macrovipera lebetina transmediterranea (Blunt-nosed viper)).